An 806-amino-acid chain; its full sequence is Fibroblast growth factor receptor 3 (806 aa).

An N-terminal signal peptide occupies residues 1–19 (MRAAWGSVWCLCLAAAVGA). The Extracellular segment spans residues 20 to 364 (LPAARRRGAE…ELMEMDDSGS (345 aa)). An Ig-like C2-type 1 domain is found at 24–124 (RRRGAERSGG…VLGNFTVRVT (101 aa)). Cys61 and Cys107 are disulfide-bonded. Asn83, Asn96, and Asn118 each carry an N-linked (GlcNAc...) asparagine glycan. Residues 121–146 (VRVTDSPSSGDDEDDDDESEDTGVPF) are disordered. A compositionally biased stretch (acidic residues) spans 130 to 141 (GDDEDDDDESED). 2 Ig-like C2-type domains span residues 150-238 (PDKM…YQLD) and 247-349 (PILQ…AWLT). Cys170 and Cys222 are joined by a disulfide. Residues Asn219, Asn256, Asn288, Asn309, and Asn322 are each glycosylated (N-linked (GlcNAc...) asparagine). The cysteines at positions 269 and 333 are disulfide-linked. A helical transmembrane segment spans residues 365-389 (VYAGILSYGTGLVLFILVLVIVIIC). The Cytoplasmic portion of the chain corresponds to 390 to 806 (RMKMPNKKAM…HVPCNGVIRT (417 aa)). The 290-residue stretch at 466 to 755 (LTLGKPLGEG…LTMTSTDEYL (290 aa)) folds into the Protein kinase domain. ATP contacts are provided by residues 472-480 (LGEGCFGQV) and Lys502. Asp611 serves as the catalytic Proton acceptor. 4 positions are modified to phosphotyrosine; by autocatalysis: Tyr641, Tyr642, Tyr718, and Tyr754.

It belongs to the protein kinase superfamily. Tyr protein kinase family. Fibroblast growth factor receptor subfamily. In terms of assembly, monomer. Homodimer after ligand binding. In terms of processing, autophosphorylated. Binding of FGF family members together with heparan sulfate proteoglycan or heparin promotes receptor dimerization and autophosphorylation on tyrosine residues. Autophosphorylation occurs in trans between the two FGFR molecules present in the dimer.

The protein resides in the cell membrane. It catalyses the reaction L-tyrosyl-[protein] + ATP = O-phospho-L-tyrosyl-[protein] + ADP + H(+). Present in an inactive conformation in the absence of bound ligand. Ligand binding leads to dimerization and activation by autophosphorylation on tyrosine residues. Functionally, tyrosine-protein kinase that acts as a cell-surface receptor for fibroblast growth factors and plays an essential role in the regulation of cell proliferation, differentiation and apoptosis. Plays an essential role in the regulation of chondrocyte differentiation, proliferation and apoptosis, and is required for normal skeleton development. Regulates both osteogenesis and postnatal bone mineralization by osteoblasts. Promotes apoptosis in chondrocytes, but can also promote cancer cell proliferation. Phosphorylates PLCG1, CBL and FRS2. Ligand binding leads to the activation of several signaling cascades. Activation of PLCG1 leads to the production of the cellular signaling molecules diacylglycerol and inositol 1,4,5-trisphosphate. Phosphorylation of FRS2 triggers recruitment of GRB2, GAB1, PIK3R1 and SOS1, and mediates activation of RAS, MAPK1/ERK2, MAPK3/ERK1 and the MAP kinase signaling pathway, as well as of the AKT1 signaling pathway. The protein is Fibroblast growth factor receptor 3 (FGFR3) of Gallus gallus (Chicken).